A 95-amino-acid polypeptide reads, in one-letter code: MKFPKRIRTYCPRCNTHTEHRVAQYRAGKRRAMALGERRYRRKQEGYGSQRRPEQKRFAKVTKKQVLVITCTVCGRKRPFLGIRLKRLELVDVVR.

Zn(2+) contacts are provided by C11, C14, C71, and C74. The C4-type zinc finger occupies 11 to 74 (CPRCNTHTEH…QVLVITCTVC (64 aa)).

It belongs to the eukaryotic ribosomal protein eL42 family. As to quaternary structure, part of the 50S ribosomal subunit. It depends on Zn(2+) as a cofactor.

Its function is as follows. Binds to the 23S rRNA. In Aeropyrum pernix (strain ATCC 700893 / DSM 11879 / JCM 9820 / NBRC 100138 / K1), this protein is Large ribosomal subunit protein eL42.